The sequence spans 72 residues: Translation initiation factor IF-1 (72 aa).

In terms of domain architecture, S1-like spans 1-72; that stretch reads MAKEEAIEIE…TKGRITYRYK (72 aa).

It belongs to the IF-1 family. In terms of assembly, component of the 30S ribosomal translation pre-initiation complex which assembles on the 30S ribosome in the order IF-2 and IF-3, IF-1 and N-formylmethionyl-tRNA(fMet); mRNA recruitment can occur at any time during PIC assembly.

Its subcellular location is the cytoplasm. One of the essential components for the initiation of protein synthesis. Stabilizes the binding of IF-2 and IF-3 on the 30S subunit to which N-formylmethionyl-tRNA(fMet) subsequently binds. Helps modulate mRNA selection, yielding the 30S pre-initiation complex (PIC). Upon addition of the 50S ribosomal subunit IF-1, IF-2 and IF-3 are released leaving the mature 70S translation initiation complex. The polypeptide is Translation initiation factor IF-1 (Chlorobium phaeobacteroides (strain DSM 266 / SMG 266 / 2430)).